A 615-amino-acid chain; its full sequence is DNA mismatch repair protein MutL (615 aa).

It belongs to the DNA mismatch repair MutL/HexB family.

In terms of biological role, this protein is involved in the repair of mismatches in DNA. It is required for dam-dependent methyl-directed DNA mismatch repair. May act as a 'molecular matchmaker', a protein that promotes the formation of a stable complex between two or more DNA-binding proteins in an ATP-dependent manner without itself being part of a final effector complex. This is DNA mismatch repair protein MutL from Histophilus somni (strain 2336) (Haemophilus somnus).